The sequence spans 225 residues: ATP-dependent dethiobiotin synthetase BioD (225 aa).

Residue Glu12–Tyr17 participates in ATP binding. Thr16 provides a ligand contact to Mg(2+). Residue Lys37 is part of the active site. Residue Ser41 participates in substrate binding. ATP is bound by residues Asp52, Glu114 to Gly117, and Asn174 to Cys175. Residues Asp52 and Glu114 each coordinate Mg(2+).

It belongs to the dethiobiotin synthetase family. Homodimer. Mg(2+) is required as a cofactor.

Its subcellular location is the cytoplasm. The enzyme catalyses (7R,8S)-7,8-diammoniononanoate + CO2 + ATP = (4R,5S)-dethiobiotin + ADP + phosphate + 3 H(+). The protein operates within cofactor biosynthesis; biotin biosynthesis; biotin from 7,8-diaminononanoate: step 1/2. Catalyzes a mechanistically unusual reaction, the ATP-dependent insertion of CO2 between the N7 and N8 nitrogen atoms of 7,8-diaminopelargonic acid (DAPA, also called 7,8-diammoniononanoate) to form a ureido ring. The chain is ATP-dependent dethiobiotin synthetase BioD from Francisella tularensis subsp. novicida (strain U112).